Reading from the N-terminus, the 585-residue chain is Glutamine--tRNA ligase (585 aa).

Positions 51 to 61 (PEPNGYLHIGH) match the 'HIGH' region motif. Residues 52-54 (EPN) and 58-64 (HIGHAKS) each bind ATP. 2 residues coordinate L-glutamine: Asp84 and Tyr238. Residues Thr257 and 292-293 (RL) each bind ATP. Residues 299–303 (ITSKR) carry the 'KMSKS' region motif.

The protein belongs to the class-I aminoacyl-tRNA synthetase family. As to quaternary structure, monomer.

Its subcellular location is the cytoplasm. The enzyme catalyses tRNA(Gln) + L-glutamine + ATP = L-glutaminyl-tRNA(Gln) + AMP + diphosphate. The polypeptide is Glutamine--tRNA ligase (Cupriavidus taiwanensis (strain DSM 17343 / BCRC 17206 / CCUG 44338 / CIP 107171 / LMG 19424 / R1) (Ralstonia taiwanensis (strain LMG 19424))).